We begin with the raw amino-acid sequence, 358 residues long: tRNA-specific 2-thiouridylase MnmA (358 aa).

ATP contacts are provided by residues 6–13 and M32; that span reads ALSGGVDS. The Nucleophile role is filled by C103. A disulfide bridge connects residues C103 and C201. An ATP-binding site is contributed by G127. An interaction with tRNA region spans residues 151–153; that stretch reads KDQ. Catalysis depends on C201, which acts as the Cysteine persulfide intermediate.

It belongs to the MnmA/TRMU family.

It localises to the cytoplasm. The catalysed reaction is S-sulfanyl-L-cysteinyl-[protein] + uridine(34) in tRNA + AH2 + ATP = 2-thiouridine(34) in tRNA + L-cysteinyl-[protein] + A + AMP + diphosphate + H(+). Its function is as follows. Catalyzes the 2-thiolation of uridine at the wobble position (U34) of tRNA, leading to the formation of s(2)U34. This is tRNA-specific 2-thiouridylase MnmA from Thermotoga neapolitana (strain ATCC 49049 / DSM 4359 / NBRC 107923 / NS-E).